A 216-amino-acid chain; its full sequence is Superoxide dismutase [Cu-Zn] 2, chloroplastic (216 aa).

The transit peptide at 1–62 (MAATNTILAF…APSKALTVVS (62 aa)) directs the protein to the chloroplast. Residues H108, H110, and H125 each contribute to the Cu cation site. C119 and C208 are disulfide-bonded. 4 residues coordinate Zn(2+): H125, H133, H142, and D145. H182 lines the Cu cation pocket.

This sequence belongs to the Cu-Zn superoxide dismutase family. In terms of assembly, homotetramer. It depends on Cu cation as a cofactor. The cofactor is Zn(2+). Expressed in leaves (at protein level). The spatial localization is regulated by miR398-mediated silencing. Mostly present in flowers, old rosette leaves and inflorescence, and, to a lower extent, in cauline leaves, stems and roots.

Its subcellular location is the plastid. It localises to the chloroplast. It catalyses the reaction 2 superoxide + 2 H(+) = H2O2 + O2. Destroys radicals which are normally produced within the cells and which are toxic to biological systems. Mediates tolerance to stress, including photo-oxidative stress. In Arabidopsis thaliana (Mouse-ear cress), this protein is Superoxide dismutase [Cu-Zn] 2, chloroplastic (CSD2).